The primary structure comprises 648 residues: Phosphatidylinositol-3,5-bisphosphate 3-phosphatase MTMR14 (648 aa).

The segment covering 1–19 (MAGARAAAAASAGSTASSG) has biased composition (low complexity). The disordered stretch occupies residues 1–27 (MAGARAAAAASAGSTASSGSPPPQEPG). Position 193 is an N6-acetyllysine (Lys-193). Asn-225 and Asn-240 each carry an N-linked (GlcNAc...) asparagine glycan. The active-site Phosphocysteine intermediate is Cys-329. A 1,2-diacyl-sn-glycero-3-phospho-(1D-myo-inositol-3,5-bisphosphate)-binding residues include Gly-332, Trp-333, Asp-334, Arg-335, and Arg-381. A 1,2-diacyl-sn-glycero-3-phospho-(1D-myo-inositol-3-phosphate) is bound by residues Gly-332, Trp-333, Asp-334, Arg-335, and Arg-381. The interval 471–544 (PTQAAWRKSH…PRSVDHPLPG (74 aa)) is disordered. A compositionally biased stretch (basic and acidic residues) spans 494–506 (PSEERLPSHHGLT). Ser-516 is subject to Phosphoserine. An N-linked (GlcNAc...) asparagine glycan is attached at Asn-517. A phosphoserine mark is found at Ser-528, Ser-578, and Ser-622. Arg-636 is modified (omega-N-methylarginine).

Belongs to the protein-tyrosine phosphatase family. Non-receptor class myotubularin subfamily.

It is found in the cytoplasm. The catalysed reaction is a 1,2-diacyl-sn-glycero-3-phospho-(1D-myo-inositol-3,5-bisphosphate) + H2O = a 1,2-diacyl-sn-glycero-3-phospho-(1D-myo-inositol-5-phosphate) + phosphate. It carries out the reaction a 1,2-diacyl-sn-glycero-3-phospho-(1D-myo-inositol-3-phosphate) + H2O = a 1,2-diacyl-sn-glycero-3-phospho-(1D-myo-inositol) + phosphate. Lipid phosphatase that specifically dephosphorylates the D-3 position of phosphatidylinositol 3-phosphate and phosphatidylinositol 3,5-bisphosphate, generating phosphatidylinositol and phosphatidylinositol 5-phosphate. In Mus musculus (Mouse), this protein is Phosphatidylinositol-3,5-bisphosphate 3-phosphatase MTMR14.